We begin with the raw amino-acid sequence, 273 residues long: 2,3,4,5-tetrahydropyridine-2,6-dicarboxylate N-succinyltransferase (273 aa).

Residues Arg104 and Asp141 each coordinate substrate.

The protein belongs to the transferase hexapeptide repeat family. In terms of assembly, homotrimer.

Its subcellular location is the cytoplasm. It catalyses the reaction (S)-2,3,4,5-tetrahydrodipicolinate + succinyl-CoA + H2O = (S)-2-succinylamino-6-oxoheptanedioate + CoA. Its pathway is amino-acid biosynthesis; L-lysine biosynthesis via DAP pathway; LL-2,6-diaminopimelate from (S)-tetrahydrodipicolinate (succinylase route): step 1/3. This Acinetobacter baylyi (strain ATCC 33305 / BD413 / ADP1) protein is 2,3,4,5-tetrahydropyridine-2,6-dicarboxylate N-succinyltransferase.